The following is a 1481-amino-acid chain: Cystic fibrosis transmembrane conductance regulator (1481 aa).

Topologically, residues 1 to 77 are cytoplasmic; sequence MQRSPLEKAS…KLINALRRCF (77 aa). The chain crosses the membrane as a helical span at residues 78–98; that stretch reads FWRFMFYGILLYLGEVTKAVQ. Positions 81-365 constitute an ABC transmembrane type-1 1 domain; the sequence is FMFYGILLYL…WAVQTWYDSL (285 aa). The Extracellular portion of the chain corresponds to 99–122; the sequence is PLLLGRIIASYDPDNKEERSIAIY. Residues 123 to 146 form a helical membrane-spanning segment; sequence LGIGLCLLFIVRTLLLHPAIFGLH. Over 147–195 the chain is Cytoplasmic; it reads HIGMQMRIAMFSLIYKKTLKLSSRVLDKISIGQLVSLLSNNLNKFDEGL. A helical transmembrane segment spans residues 196–216; it reads ALAHFVWIVPLQVALLMGLIW. The Extracellular portion of the chain corresponds to 217–222; that stretch reads ELLQAS. Residues 223 to 243 traverse the membrane as a helical segment; it reads AFCGLGFLIVLALFQAGLGRM. Topologically, residues 244–298 are cytoplasmic; it reads MMKYRDQRAGKINERLVITSEMIENIQSVKAYCWEEAMEKMIENLRQTELKLTRK. Residues 299-319 traverse the membrane as a helical segment; that stretch reads AAYVRYFNSSAFFFSGFFVVF. At 320-339 the chain is on the extracellular side; the sequence is LSVLPYALIKGIVLRKIFTT. The chain crosses the membrane as a helical span at residues 340–358; the sequence is ISFCIVLRMAVTRQFPWAV. The Cytoplasmic segment spans residues 359–858; sequence QTWYDSLGAI…YLRYITVHKS (500 aa). ATP-binding positions include tryptophan 401, serine 434, 458-465, and glutamine 493; that span reads GSTGAGKT. The ABC transporter 1 domain maps to 423-646; that stretch reads NDDDSLFFSN…RPDFSSKLMG (224 aa). Cysteine 524 is lipidated: S-palmitoyl cysteine. 2 positions are modified to phosphoserine: serine 549 and serine 660. A disordered R region region spans residues 654–831; the sequence is SAERRNSILT…EEINEEDLKE (178 aa). A Phosphoserine; by PKA modification is found at serine 670. Phosphoserine is present on serine 686. Lysine 688 is covalently cross-linked (Glycyl lysine isopeptide (Lys-Gly) (interchain with G-Cter in ubiquitin)). Serine 700 and serine 712 each carry phosphoserine. Threonine 717 is subject to Phosphothreonine. A phosphoserine mark is found at serine 737, serine 753, serine 768, serine 790, serine 795, and serine 813. The helical transmembrane segment at 859–879 threads the bilayer; the sequence is LIFVLIWCLVIFLAEVAASLV. Residues 859–1155 form the ABC transmembrane type-1 2 domain; sequence LIFVLIWCLV…AVNSSIDVDS (297 aa). Residues 880-918 lie on the Extracellular side of the membrane; the sequence is VLWFLGNTPPQDKGNSTYSRNNSYAVIITRTSSYYVFYI. N-linked (GlcNAc...) asparagine glycans are attached at residues asparagine 894 and asparagine 900. Residues 919–939 form a discontinuously helical membrane-spanning segment; sequence YVGVADTLLAMGFFRGLPLVH. Residues 940–990 are Cytoplasmic-facing; that stretch reads TLITVSKILHHKMLHSVLQAPMSTLNTLKAGGILNRFSKDIAILDDLLPLT. A helical transmembrane segment spans residues 991 to 1011; it reads IFDFIQLLLIVIGAIAVVAVL. The Extracellular segment spans residues 1012-1013; it reads QP. A helical membrane pass occupies residues 1014–1034; sequence YIFVATVPVIVAFIMLRAYFL. Topologically, residues 1035-1095 are cytoplasmic; the sequence is QTSQQLKQLE…TANWFLYLST (61 aa). Residues 1096-1116 traverse the membrane as a helical segment; that stretch reads LRWFQMRIEMIFVIFFIAVTF. The Extracellular segment spans residues 1117–1130; it reads ISILTTGEGEGTVG. The helical transmembrane segment at 1131 to 1151 threads the bilayer; that stretch reads IILTLAMNIMSTLQWAVNSSI. Residues 1152–1481 are Cytoplasmic-facing; that stretch reads DVDSLMRSVS…TEEEVQDTRL (330 aa). One can recognise an ABC transporter 2 domain in the interval 1211 to 1444; sequence MTVKDLTAKY…RSLFRQAISP (234 aa). ATP contacts are provided by residues tyrosine 1220 and 1245–1252; that span reads GRTGSGKS. The segment at 1387–1481 is interaction with GORASP2; that stretch reads RTLKQAFADC…TEEEVQDTRL (95 aa). The S-palmitoyl cysteine moiety is linked to residue cysteine 1396. Serine 1445 and serine 1457 each carry phosphoserine. Residues 1479–1481 carry the PDZ-binding motif; sequence TRL.

It belongs to the ABC transporter superfamily. ABCC family. CFTR transporter (TC 3.A.1.202) subfamily. Monomer; does not require oligomerization for channel activity. May form oligomers in the membrane. Interacts with SLC26A3, SLC26A6 and NHERF1. Interacts with SHANK2. Interacts with MYO6. Interacts (via C-terminus) with GOPC (via PDZ domain); this promotes CFTR internalization and thereby decreases channel activity. Interacts with SLC4A7 through NHERF1. Found in a complex with MYO5B and RAB11A. Interacts with ANO1. Interacts with SLC26A8. Interacts with AHCYL1; the interaction increases CFTR activity. Interacts with CSE1L. The core-glycosylated form interacts with GORASP2 (via PDZ GRASP-type 1 domain) in respone to ER stress. Interacts with MARCHF2; the interaction leads to CFTR ubiqtuitination and degradation. Interacts with ADGRG2. In terms of processing, N-glycosylated. Phosphorylated; cAMP treatment promotes phosphorylation and activates the channel. Dephosphorylation decreases the ATPase activity (in vitro). Phosphorylation at PKA sites activates the channel. Phosphorylation at PKC sites enhances the response to phosphorylation by PKA. Phosphorylated by AMPK; this inhibits channel activity. Post-translationally, ubiquitinated, leading to its degradation in the lysosome. Deubiquitination by USP10 in early endosomes enhances its endocytic recycling to the cell membrane. Ubiquitinated by RNF185 during ER stress. Ubiquitinated by MARCHF2.

It is found in the apical cell membrane. The protein localises to the early endosome membrane. Its subcellular location is the cell membrane. The protein resides in the recycling endosome membrane. It localises to the endoplasmic reticulum membrane. It is found in the nucleus. The catalysed reaction is ATP + H2O + closed Cl(-) channel = ADP + phosphate + open Cl(-) channel.. It carries out the reaction chloride(in) = chloride(out). It catalyses the reaction hydrogencarbonate(in) = hydrogencarbonate(out). The enzyme catalyses ATP + H2O = ADP + phosphate + H(+). Its function is as follows. Epithelial ion channel that plays an important role in the regulation of epithelial ion and water transport and fluid homeostasis. Mediates the transport of chloride ions across the cell membrane. Possesses an intrinsic ATPase activity and utilizes ATP to gate its channel; the passive flow of anions through the channel is gated by cycles of ATP binding and hydrolysis by the ATP-binding domains. The ion channel is also permeable to HCO(3)(-); selectivity depends on the extracellular chloride concentration. Exerts its function also by modulating the activity of other ion channels and transporters. Contributes to the regulation of the pH and the ion content of the epithelial fluid layer. Modulates the activity of the epithelial sodium channel (ENaC) complex, in part by regulating the cell surface expression of the ENaC complex. May regulate bicarbonate secretion and salvage in epithelial cells by regulating the transporter SLC4A7. Can inhibit the chloride channel activity of ANO1. Plays a role in the chloride and bicarbonate homeostasis during sperm epididymal maturation and capacitation. This Macaca fascicularis (Crab-eating macaque) protein is Cystic fibrosis transmembrane conductance regulator.